The chain runs to 229 residues: Ribonuclease 3 (229 aa).

The RNase III domain occupies 5 to 127; that stretch reads LSRLERQLGY…LIGAIYLDAG (123 aa). Position 40 (glutamate 40) interacts with Mg(2+). The active site involves aspartate 44. Mg(2+)-binding residues include aspartate 113 and glutamate 116. Residue glutamate 116 is part of the active site. Residues 154–224 enclose the DRBM domain; it reads DPKTRLQEFL…AAAALIALGV (71 aa).

The protein belongs to the ribonuclease III family. Homodimer. The cofactor is Mg(2+).

The protein localises to the cytoplasm. It catalyses the reaction Endonucleolytic cleavage to 5'-phosphomonoester.. Functionally, digests double-stranded RNA. Involved in the processing of primary rRNA transcript to yield the immediate precursors to the large and small rRNAs (23S and 16S). Processes some mRNAs, and tRNAs when they are encoded in the rRNA operon. Processes pre-crRNA and tracrRNA of type II CRISPR loci if present in the organism. This chain is Ribonuclease 3, found in Pseudomonas fluorescens (strain ATCC BAA-477 / NRRL B-23932 / Pf-5).